The sequence spans 382 residues: Ribosomal RNA large subunit methyltransferase G (382 aa).

Belongs to the methyltransferase superfamily. RlmG family.

Its subcellular location is the cytoplasm. It carries out the reaction guanosine(1835) in 23S rRNA + S-adenosyl-L-methionine = N(2)-methylguanosine(1835) in 23S rRNA + S-adenosyl-L-homocysteine + H(+). In terms of biological role, specifically methylates the guanine in position 1835 (m2G1835) of 23S rRNA. The sequence is that of Ribosomal RNA large subunit methyltransferase G from Aliivibrio fischeri (strain MJ11) (Vibrio fischeri).